The following is a 382-amino-acid chain: Mannitol-1-phosphate 5-dehydrogenase (382 aa).

Residue 3-14 participates in NAD(+) binding; that stretch reads ALHFGAGNIGRG.

The protein belongs to the mannitol dehydrogenase family.

The enzyme catalyses D-mannitol 1-phosphate + NAD(+) = beta-D-fructose 6-phosphate + NADH + H(+). This Salmonella newport (strain SL254) protein is Mannitol-1-phosphate 5-dehydrogenase.